Reading from the N-terminus, the 152-residue chain is Large ribosomal subunit protein bL9 (152 aa).

It belongs to the bacterial ribosomal protein bL9 family.

Its function is as follows. Binds to the 23S rRNA. This is Large ribosomal subunit protein bL9 from Microcystis aeruginosa (strain NIES-843 / IAM M-2473).